The following is a 245-amino-acid chain: 1-(5-phosphoribosyl)-5-[(5-phosphoribosylamino)methylideneamino] imidazole-4-carboxamide isomerase (245 aa).

The Proton acceptor role is filled by aspartate 7. Aspartate 129 functions as the Proton donor in the catalytic mechanism.

It belongs to the HisA/HisF family.

It is found in the cytoplasm. The enzyme catalyses 1-(5-phospho-beta-D-ribosyl)-5-[(5-phospho-beta-D-ribosylamino)methylideneamino]imidazole-4-carboxamide = 5-[(5-phospho-1-deoxy-D-ribulos-1-ylimino)methylamino]-1-(5-phospho-beta-D-ribosyl)imidazole-4-carboxamide. It participates in amino-acid biosynthesis; L-histidine biosynthesis; L-histidine from 5-phospho-alpha-D-ribose 1-diphosphate: step 4/9. The protein is 1-(5-phosphoribosyl)-5-[(5-phosphoribosylamino)methylideneamino] imidazole-4-carboxamide isomerase of Shewanella piezotolerans (strain WP3 / JCM 13877).